A 90-amino-acid chain; its full sequence is MKFNVEIHKRVLKDLKDLPPSNLKKFKELIETLKTNPIPKEKFDIKRLKGSDEVYRVRIGKFRVQYVVLWDDRIIIIRKISRREGAYKNP.

This sequence belongs to the RelE toxin family.

Functionally, toxic component of a type II toxin-antitoxin (TA) system. Its cognate antitoxin is RelB1 (Potential). This is Putative toxin RelE1 (relE1) from Methanocaldococcus jannaschii (strain ATCC 43067 / DSM 2661 / JAL-1 / JCM 10045 / NBRC 100440) (Methanococcus jannaschii).